Reading from the N-terminus, the 429-residue chain is Arginine biosynthesis bifunctional protein ArgJ (429 aa).

Substrate contacts are provided by threonine 181, lysine 207, threonine 218, glutamate 302, asparagine 424, and serine 429. Threonine 218 functions as the Nucleophile in the catalytic mechanism.

It belongs to the ArgJ family. As to quaternary structure, heterotetramer of two alpha and two beta chains.

The protein localises to the cytoplasm. The enzyme catalyses N(2)-acetyl-L-ornithine + L-glutamate = N-acetyl-L-glutamate + L-ornithine. It carries out the reaction L-glutamate + acetyl-CoA = N-acetyl-L-glutamate + CoA + H(+). The protein operates within amino-acid biosynthesis; L-arginine biosynthesis; L-ornithine and N-acetyl-L-glutamate from L-glutamate and N(2)-acetyl-L-ornithine (cyclic): step 1/1. Its pathway is amino-acid biosynthesis; L-arginine biosynthesis; N(2)-acetyl-L-ornithine from L-glutamate: step 1/4. Catalyzes two activities which are involved in the cyclic version of arginine biosynthesis: the synthesis of N-acetylglutamate from glutamate and acetyl-CoA as the acetyl donor, and of ornithine by transacetylation between N(2)-acetylornithine and glutamate. The polypeptide is Arginine biosynthesis bifunctional protein ArgJ (Chlorobium chlorochromatii (strain CaD3)).